The sequence spans 231 residues: Large ribosomal subunit protein uL1 (231 aa).

The protein belongs to the universal ribosomal protein uL1 family. In terms of assembly, part of the 50S ribosomal subunit.

In terms of biological role, binds directly to 23S rRNA. The L1 stalk is quite mobile in the ribosome, and is involved in E site tRNA release. Functionally, protein L1 is also a translational repressor protein, it controls the translation of the L11 operon by binding to its mRNA. This Ectopseudomonas mendocina (strain ymp) (Pseudomonas mendocina) protein is Large ribosomal subunit protein uL1.